Consider the following 261-residue polypeptide: MPSRCPGVAGPPALARTEGSEGSAGQSYHQNSKGTGEQHKAERIKEGHRMSSHTAKLQELWRTTQIQTIHIPKSMTDASFLKHPELTSGQKRYLCSIAKICNSSYLRTLMKRQYMHLFHHGLQKPGVLTHHRSHISSRYSQKQHSPCTTWRHHLEREDSLGIAAEAPEMIIHALWRPLRHKEGLKIGYASKTRCKSLKIFRRPGRLFLLPVSSKDYQPCMNDETKEEDLLNECMQSMSIQEQGSSHASLTVSCPTPSSAIP.

The interval Met1 to Ser52 is disordered. Over residues Ser23 to Thr35 the composition is skewed to polar residues. The span at Gly36–Arg49 shows a compositional bias: basic and acidic residues.

This sequence belongs to the FAM216 family.

This Rattus norvegicus (Rat) protein is Protein FAM216A (Fam216a).